Consider the following 762-residue polypeptide: Subtilisin-like protease SBT3.11 (762 aa).

A signal peptide spans 1 to 16; that stretch reads MMSSIVSWWFFWVISA. The propeptide at 17-116 is activation peptide; it reads VCILKVEFNI…VTPNTFYELQ (100 aa). Residues 37-115 form the Inhibitor I9 domain; that stretch reads VHIVYLGEKE…QVTPNTFYEL (79 aa). Residues 120-609 form the Peptidase S8 domain; sequence TFDYLGLSHS…GGLVNPNKAA (490 aa). Asp-150 acts as the Charge relay system in catalysis. A glycan (N-linked (GlcNAc...) asparagine) is linked at Asn-206. His-226 serves as the catalytic Charge relay system. Residues Asn-241 and Asn-371 are each glycosylated (N-linked (GlcNAc...) asparagine). The active-site Charge relay system is the Ser-540.

Belongs to the peptidase S8 family.

Its subcellular location is the secreted. The chain is Subtilisin-like protease SBT3.11 from Arabidopsis thaliana (Mouse-ear cress).